The sequence spans 1073 residues: Carbamoyl phosphate synthase large chain (1073 aa).

A carboxyphosphate synthetic domain region spans residues 2–403; that stretch reads PKRTDIKSIL…SVQKALRGLE (402 aa). ATP is bound by residues Arg-129, Arg-169, Gly-175, Gly-176, Glu-208, Leu-210, Glu-215, Gly-241, Val-242, His-243, Gln-285, and Glu-299. An ATP-grasp 1 domain is found at 133–328; sequence DKAMKDIGLA…IAKIAAKLAV (196 aa). 3 residues coordinate Mg(2+): Gln-285, Glu-299, and Asn-301. The Mn(2+) site is built by Gln-285, Glu-299, and Asn-301. Positions 404-553 are oligomerization domain; it reads VGATGFDPKL…YSTYEEECEA (150 aa). The tract at residues 554–935 is carbamoyl phosphate synthetic domain; sequence NPSSREKIMI…AFAKAQLGAS (382 aa). The ATP-grasp 2 domain occupies 678-869; that stretch reads QQMVQRLNLR…LAKVAARVMA (192 aa). ATP contacts are provided by Arg-714, His-753, Leu-755, Glu-760, Gly-785, Val-786, His-787, Ser-788, Gln-828, and Glu-840. Gln-828, Glu-840, and Asn-842 together coordinate Mg(2+). Mn(2+)-binding residues include Gln-828, Glu-840, and Asn-842. Residues 936 to 1073 form the MGS-like domain; the sequence is EILPTAGCAF…LQDLHAGIKA (138 aa). Residues 936-1073 form an allosteric domain region; the sequence is EILPTAGCAF…LQDLHAGIKA (138 aa).

The protein belongs to the CarB family. As to quaternary structure, composed of two chains; the small (or glutamine) chain promotes the hydrolysis of glutamine to ammonia, which is used by the large (or ammonia) chain to synthesize carbamoyl phosphate. Tetramer of heterodimers (alpha,beta)4. Requires Mg(2+) as cofactor. The cofactor is Mn(2+).

The catalysed reaction is hydrogencarbonate + L-glutamine + 2 ATP + H2O = carbamoyl phosphate + L-glutamate + 2 ADP + phosphate + 2 H(+). It carries out the reaction hydrogencarbonate + NH4(+) + 2 ATP = carbamoyl phosphate + 2 ADP + phosphate + 2 H(+). Its pathway is amino-acid biosynthesis; L-arginine biosynthesis; carbamoyl phosphate from bicarbonate: step 1/1. It functions in the pathway pyrimidine metabolism; UMP biosynthesis via de novo pathway; (S)-dihydroorotate from bicarbonate: step 1/3. Functionally, large subunit of the glutamine-dependent carbamoyl phosphate synthetase (CPSase). CPSase catalyzes the formation of carbamoyl phosphate from the ammonia moiety of glutamine, carbonate, and phosphate donated by ATP, constituting the first step of 2 biosynthetic pathways, one leading to arginine and/or urea and the other to pyrimidine nucleotides. The large subunit (synthetase) binds the substrates ammonia (free or transferred from glutamine from the small subunit), hydrogencarbonate and ATP and carries out an ATP-coupled ligase reaction, activating hydrogencarbonate by forming carboxy phosphate which reacts with ammonia to form carbamoyl phosphate. In Pseudomonas aeruginosa (strain ATCC 15692 / DSM 22644 / CIP 104116 / JCM 14847 / LMG 12228 / 1C / PRS 101 / PAO1), this protein is Carbamoyl phosphate synthase large chain.